Here is a 550-residue protein sequence, read N- to C-terminus: Hydroxylamine reductase (550 aa).

[2Fe-2S] cluster contacts are provided by C3, C6, C18, and C25. Residues H249, E273, C317, C405, C433, C458, E492, and K494 each contribute to the hybrid [4Fe-2O-2S] cluster site. Residue C405 is modified to Cysteine persulfide.

Belongs to the HCP family. [2Fe-2S] cluster is required as a cofactor. Hybrid [4Fe-2O-2S] cluster serves as cofactor.

It localises to the cytoplasm. It carries out the reaction A + NH4(+) + H2O = hydroxylamine + AH2 + H(+). In terms of biological role, catalyzes the reduction of hydroxylamine to form NH(3) and H(2)O. The chain is Hydroxylamine reductase from Escherichia coli (strain SMS-3-5 / SECEC).